A 502-amino-acid polypeptide reads, in one-letter code: Phenylalanine--tRNA ligase alpha subunit (502 aa).

Residues T339, 382-384 (QIE), and Y422 contribute to the L-phenylalanine site. Residue E424 participates in Mg(2+) binding. Residue F448 participates in L-phenylalanine binding.

This sequence belongs to the class-II aminoacyl-tRNA synthetase family. Phe-tRNA synthetase alpha subunit type 2 subfamily. As to quaternary structure, tetramer of two alpha and two beta subunits. The cofactor is Mg(2+).

The protein localises to the cytoplasm. The catalysed reaction is tRNA(Phe) + L-phenylalanine + ATP = L-phenylalanyl-tRNA(Phe) + AMP + diphosphate + H(+). This chain is Phenylalanine--tRNA ligase alpha subunit, found in Halobacterium salinarum (strain ATCC 29341 / DSM 671 / R1).